Consider the following 295-residue polypeptide: Methionine aminopeptidase (295 aa).

Residue histidine 62 participates in substrate binding. 3 residues coordinate a divalent metal cation: aspartate 82, aspartate 93, and histidine 153. Histidine 161 lines the substrate pocket. Glutamate 187 and glutamate 280 together coordinate a divalent metal cation.

The protein belongs to the peptidase M24A family. Methionine aminopeptidase archaeal type 2 subfamily. Monomer. Co(2+) is required as a cofactor. Requires Zn(2+) as cofactor. Mn(2+) serves as cofactor. The cofactor is Fe(2+).

The enzyme catalyses Release of N-terminal amino acids, preferentially methionine, from peptides and arylamides.. Functionally, removes the N-terminal methionine from nascent proteins. The N-terminal methionine is often cleaved when the second residue in the primary sequence is small and uncharged (Met-Ala-, Cys, Gly, Pro, Ser, Thr, or Val). This is Methionine aminopeptidase from Pyrococcus horikoshii (strain ATCC 700860 / DSM 12428 / JCM 9974 / NBRC 100139 / OT-3).